Reading from the N-terminus, the 577-residue chain is General transcription factor IIF subunit 1 (577 aa).

The segment at 1-36 (MSSASKSTPSAASGSSTSAAAAAAASVASGSASSSA) is disordered. 4 positions are modified to phosphoserine: Ser183, Ser246, Ser250, and Ser252. Positions 236–508 (KITDMDEWID…TSLPTSFSGG (273 aa)) are disordered. A compositionally biased stretch (acidic residues) spans 240–256 (MDEWIDSEDESDSEDEE). Residues 257–271 (DKKKKEQEDSDDGKA) show a composition bias toward basic and acidic residues. Basic residues predominate over residues 272–285 (KGKGKKGADKKKKK). The span at 289–304 (DDEAFEESDDGDEEGR) shows a compositional bias: acidic residues. The segment covering 319–341 (PEAKVDKDMKGVAEEDALRKLLT) has biased composition (basic and acidic residues). Residue Thr341 is modified to Phosphothreonine. 3 positions are modified to phosphoserine: Ser342, Ser352, and Ser355. Residues 362 to 376 (GEKKKKDKGKDEVSK) are compositionally biased toward basic and acidic residues. Over residues 392–406 (SNGSGDSSTDFSSDS) the composition is skewed to low complexity. The span at 423–437 (VVKDKDKEKEKEKES) shows a compositional bias: basic and acidic residues. Over residues 438–456 (AASSKVIASSSNANKSRSA) the composition is skewed to low complexity. 2 positions are modified to phosphoserine: Ser453 and Ser455. Thr457 carries the phosphothreonine modification. Polar residues-rich tracts occupy residues 471–489 (SLPS…TSTP) and 496–506 (EISTSLPTSFS). Ser482 and Ser484 each carry phosphoserine. Thr488 carries the post-translational modification Phosphothreonine.

Belongs to the TFIIF alpha subunit family. As to quaternary structure, heterodimer of an alpha and a beta subunit. In terms of processing, phosphorylated on Ser and other residues by TAF1 and casein kinase II-like kinases.

It localises to the nucleus. Its function is as follows. TFIIF is a general transcription initiation factor that binds to RNA polymerase II and helps to recruit it to the initiation complex in collaboration with TFIIB. It promotes transcription elongation. This chain is General transcription factor IIF subunit 1, found in Drosophila melanogaster (Fruit fly).